The primary structure comprises 202 residues: Large ribosomal subunit protein uL4 (202 aa).

A disordered region spans residues 40–71 (GRQGSKAQKTRSQVSGGGKKPWRQKGSGRARA). Polar residues predominate over residues 44–53 (SKAQKTRSQV).

This sequence belongs to the universal ribosomal protein uL4 family. As to quaternary structure, part of the 50S ribosomal subunit.

In terms of biological role, one of the primary rRNA binding proteins, this protein initially binds near the 5'-end of the 23S rRNA. It is important during the early stages of 50S assembly. It makes multiple contacts with different domains of the 23S rRNA in the assembled 50S subunit and ribosome. Forms part of the polypeptide exit tunnel. The polypeptide is Large ribosomal subunit protein uL4 (Hahella chejuensis (strain KCTC 2396)).